The primary structure comprises 253 residues: Carboxy-S-adenosyl-L-methionine synthase (253 aa).

S-adenosyl-L-methionine-binding positions include Tyr49, 74-76, 98-99, and Asn141; these read GCS and DN.

This sequence belongs to the class I-like SAM-binding methyltransferase superfamily. Cx-SAM synthase family.

It catalyses the reaction prephenate + S-adenosyl-L-methionine = carboxy-S-adenosyl-L-methionine + 3-phenylpyruvate + H2O. Functionally, catalyzes the conversion of S-adenosyl-L-methionine (SAM) to carboxy-S-adenosyl-L-methionine (Cx-SAM). The polypeptide is Carboxy-S-adenosyl-L-methionine synthase (Trichodesmium erythraeum (strain IMS101)).